A 343-amino-acid polypeptide reads, in one-letter code: Protein RecA (343 aa).

66–73 contributes to the ATP binding site; it reads GPESSGKT.

The protein belongs to the RecA family.

The protein resides in the cytoplasm. In terms of biological role, can catalyze the hydrolysis of ATP in the presence of single-stranded DNA, the ATP-dependent uptake of single-stranded DNA by duplex DNA, and the ATP-dependent hybridization of homologous single-stranded DNAs. It interacts with LexA causing its activation and leading to its autocatalytic cleavage. This is Protein RecA from Nitrosomonas eutropha (strain DSM 101675 / C91 / Nm57).